A 157-amino-acid chain; its full sequence is Small ribosomal subunit protein uS7 (157 aa).

This sequence belongs to the universal ribosomal protein uS7 family. In terms of assembly, part of the 30S ribosomal subunit. Contacts proteins S9 and S11.

One of the primary rRNA binding proteins, it binds directly to 16S rRNA where it nucleates assembly of the head domain of the 30S subunit. Is located at the subunit interface close to the decoding center, probably blocks exit of the E-site tRNA. This chain is Small ribosomal subunit protein uS7, found in Francisella philomiragia subsp. philomiragia (strain ATCC 25017 / CCUG 19701 / FSC 153 / O#319-036).